Consider the following 494-residue polypeptide: Alpha-amylase B (494 aa).

A signal peptide spans 1 to 18 (MFLAKSIVCLALLAVANA). Q19 is subject to Pyrrolidone carboxylic acid. C46 and C102 are joined by a disulfide. N116, R165, and D174 together coordinate Ca(2+). C153 and C167 are oxidised to a cystine. R202 lines the chloride pocket. The active-site Nucleophile is the D204. Residue H208 coordinates Ca(2+). The Proton donor role is filled by E241. The chloride site is built by N304 and R343. Cystine bridges form between C376/C382 and C448/C460.

This sequence belongs to the glycosyl hydrolase 13 family. Monomer. Requires Ca(2+) as cofactor. Chloride is required as a cofactor.

The enzyme catalyses Endohydrolysis of (1-&gt;4)-alpha-D-glucosidic linkages in polysaccharides containing three or more (1-&gt;4)-alpha-linked D-glucose units.. The chain is Alpha-amylase B (Amy-d) from Drosophila yakuba (Fruit fly).